A 213-amino-acid chain; its full sequence is LexA repressor (213 aa).

The segment at residues 27–47 (QTEIARAFGFKGIRAAQYHLE) is a DNA-binding region (H-T-H motif). Catalysis depends on for autocatalytic cleavage activity residues Ser133 and Lys170.

This sequence belongs to the peptidase S24 family. In terms of assembly, homodimer.

The catalysed reaction is Hydrolysis of Ala-|-Gly bond in repressor LexA.. Its function is as follows. Represses a number of genes involved in the response to DNA damage (SOS response), including recA and lexA. Has been shown to bind to the palindromic sequence 5'-CTG-N(8-12)-C-[TC]-G. In the presence of single-stranded DNA, RecA interacts with LexA causing an autocatalytic cleavage which disrupts the DNA-binding part of LexA, leading to derepression of the SOS regulon and eventually DNA repair. This chain is LexA repressor, found in Xanthomonas citri (Xanthomonas campestris pv. citri).